We begin with the raw amino-acid sequence, 538 residues long: MDTTELTQVEGSMMAVTRLATHPVLTFFAILLVAILLWYMIPYFTSPIRSRRGPLLASLTNYWRMYHAAGGSMHLVSYALHARYGPVVRMAPNYLDLDYPSLISTCLDSHGVWKKTEWHGISGVKLGNKVLYNIFSECNPAEHAQIKKPVAKYFSSTGVSVMEPHINNVLAFFVKQLDDQFTELAGFGKPLKFDEWASFYAWDTIAQSTWSRRAGHLEHAFDFDGMVDTSARVMDYLVTVGMQPSLDRFLDKNPIFRIGPPSFVPVANAAFNHLTKRRSGEDDHDPSKPDFLDCYLDAMKKYPEVVDEPRLMSYILVNVAAGVDTTATTLRAIFYLALKDRRVWEKLEAQILDASFTKLPVSYSQARAVPYLEAVIRESMRLWPGSCFAQERYVPPGGLTLPDGSFVPEGVAVGFNAYVIHRNKNVWGDDAEEFRPERWLQGEDESTERFKDRLRLMNSSDLSFGAGSRKCLGVNFATMEVYKTVATLIAVFEFELADPAREWKVHNSMFPRQSGIDLRIKRREGVTVPLGLDLGKEF.

A helical transmembrane segment spans residues 24–44; it reads VLTFFAILLVAILLWYMIPYF. Cysteine 471 contacts heme.

The protein belongs to the cytochrome P450 family. Heme serves as cofactor.

The protein resides in the membrane. It participates in secondary metabolite biosynthesis; flavonoid biosynthesis. In terms of biological role, cytochrome P450 monooxygenase; part of the gene cluster that mediates the biosynthesis of chlorflavonin, a fungal flavonoid with acetolactate synthase inhibitory activity. Within the pathway, cfoH is responsible for the hydroxylation of the flavonoid skeleton at position C2'. The pathway begins with the PKS-NRPS hybrid synthetase cfoA that uses benzoic acid or p-hydroxybenzoic acid as a starter unit with four rounds of chain elongation using malonyl-CoA to form the chalcone skeleton. Then, a new type of chalcone isomerase, cfoK, catalyzes the conversion of the chalcone into a flavanone by a histidine-mediated oxa-Michael addition mechanism. The desaturation of flavanone to flavone is catalyzed by a new type of flavone synthase, the flavin mononucleotide (FMN)-dependent oxidoreductase cfoJ. Monooxygenases cfoF, cfoG, and P450 cfoH are responsible for the hydroxylation of the flavonoid skeleton at sites C3, C8, and C2', respectively. Like cfoF, the dehydratase cfoI plays also a role in the hydroxylation of position C3. Methyltransferases cfoB, cfoC, and cfoD then catalyze the methylation of C7-OH, C8-OH, and C3-OH, respectively. Finally, the monooxygenase cfoE is responsible for the chlorination of flavonoid at position C3'. This chain is Cytochrome P450 monooxygenase cfoH, found in Aspergillus candidus.